The chain runs to 169 residues: Secreted RxLR effector protein BLN03 (169 aa).

The signal sequence occupies residues 1–21; it reads MRPRKYIVVVLLSIAYTMCLA. Positions 51–54 match the dEER motif; the sequence is TEER. The chain crosses the membrane as a helical span at residues 149 to 169; that stretch reads GSAFLFVIGFIVLLAFAMTAV.

Belongs to the RxLR effector family. As to quaternary structure, interacts with host transcription factor NAC069.

The protein localises to the secreted. It is found in the host membrane. Functionally, secreted effector that inhibits stress-induced relocalization of the endoplasmic reticulum tail-anchored transcription factors to the nucleus, thus affecting stress responses. The chain is Secreted RxLR effector protein BLN03 from Bremia lactucae (Lettuce downy mildew).